The sequence spans 183 residues: NEDD8-conjugating enzyme Ubc12 (183 aa).

The residue at position 1 (M1) is an N-acetylmethionine. The disordered stretch occupies residues 1–29; that stretch reads MIKLFSLKQQKKEEESAGGTKGSSKKASA. The segment at 1–57 is interaction with UBA3; the sequence is MIKLFSLKQQKKEEESAGGTKGSSKKASAAQLRIQKDINELNLPKTCDISFSDPDDL. Residue K3 is modified to N6-acetyllysine. In terms of domain architecture, UBC core spans 29-173; the sequence is AAQLRIQKDI…VQRSMRGGYI (145 aa). S50 carries the phosphoserine modification. The Glycyl thioester intermediate role is filled by C111. Residue R169 is modified to Asymmetric dimethylarginine; alternate. Omega-N-methylarginine; alternate is present on R169.

This sequence belongs to the ubiquitin-conjugating enzyme family. UBC12 subfamily. In terms of assembly, interacts with UBA3 and RBX1. Interacts (N-terminally acetylated form) with (via DCUN1 domain) DCUN1D1, DCUN1D2, DCUN1D3, DCUN1D4 and DCUN1D5. The acetylation of Met-1 increases affinity for DCUN1D1 by about 2 orders of magnitude and is crucial for NEDD8 transfer to cullins.

It catalyses the reaction [E1 NEDD8-activating enzyme]-S-[NEDD8 protein]-yl-L-cysteine + [E2 NEDD8-conjugating enzyme]-L-cysteine = [E1 NEDD8-activating enzyme]-L-cysteine + [E2 NEDD8-conjugating enzyme]-S-[NEDD8-protein]-yl-L-cysteine.. The protein operates within protein modification; protein neddylation. Its function is as follows. Accepts the ubiquitin-like protein NEDD8 from the UBA3-NAE1 E1 complex and catalyzes its covalent attachment to other proteins. The specific interaction with the E3 ubiquitin ligase RBX1, but not RBX2, suggests that the RBX1-UBE2M complex neddylates specific target proteins, such as CUL1, CUL2, CUL3 and CUL4. Involved in cell proliferation. The protein is NEDD8-conjugating enzyme Ubc12 (Ube2m) of Mus musculus (Mouse).